The chain runs to 344 residues: UDP-N-acetylglucosamine--N-acetylmuramyl-(pentapeptide) pyrophosphoryl-undecaprenol N-acetylglucosamine transferase (344 aa).

Residues 9–11, N118, R157, S188, and Q282 contribute to the UDP-N-acetyl-alpha-D-glucosamine site; that span reads TGG.

It belongs to the glycosyltransferase 28 family. MurG subfamily.

Its subcellular location is the cell inner membrane. It catalyses the reaction di-trans,octa-cis-undecaprenyl diphospho-N-acetyl-alpha-D-muramoyl-L-alanyl-D-glutamyl-meso-2,6-diaminopimeloyl-D-alanyl-D-alanine + UDP-N-acetyl-alpha-D-glucosamine = di-trans,octa-cis-undecaprenyl diphospho-[N-acetyl-alpha-D-glucosaminyl-(1-&gt;4)]-N-acetyl-alpha-D-muramoyl-L-alanyl-D-glutamyl-meso-2,6-diaminopimeloyl-D-alanyl-D-alanine + UDP + H(+). Its pathway is cell wall biogenesis; peptidoglycan biosynthesis. Its function is as follows. Cell wall formation. Catalyzes the transfer of a GlcNAc subunit on undecaprenyl-pyrophosphoryl-MurNAc-pentapeptide (lipid intermediate I) to form undecaprenyl-pyrophosphoryl-MurNAc-(pentapeptide)GlcNAc (lipid intermediate II). The polypeptide is UDP-N-acetylglucosamine--N-acetylmuramyl-(pentapeptide) pyrophosphoryl-undecaprenol N-acetylglucosamine transferase (Aquifex aeolicus (strain VF5)).